A 525-amino-acid chain; its full sequence is GMP synthase [glutamine-hydrolyzing] (525 aa).

A Glutamine amidotransferase type-1 domain is found at 8–207 (KILILDFGSQ…ALDICGCAAN (200 aa)). Residue cysteine 85 is the Nucleophile of the active site. Active-site residues include histidine 181 and glutamate 183. The 193-residue stretch at 208-400 (WKPSSIIEDA…LGLPYNMLYR (193 aa)) folds into the GMPS ATP-PPase domain. 235 to 241 (SGGVDSS) is a binding site for ATP.

As to quaternary structure, homodimer.

It carries out the reaction XMP + L-glutamine + ATP + H2O = GMP + L-glutamate + AMP + diphosphate + 2 H(+). Its pathway is purine metabolism; GMP biosynthesis; GMP from XMP (L-Gln route): step 1/1. Catalyzes the synthesis of GMP from XMP. The sequence is that of GMP synthase [glutamine-hydrolyzing] from Shewanella oneidensis (strain ATCC 700550 / JCM 31522 / CIP 106686 / LMG 19005 / NCIMB 14063 / MR-1).